A 217-amino-acid polypeptide reads, in one-letter code: Urease accessory protein UreG (217 aa).

Positions 1 to 18 (MNAPHHPAHSTVRTKKLP) are enriched in basic residues. Residues 1–24 (MNAPHHPAHSTVRTKKLPPLRVGV) form a disordered region. 26–33 (GPVGSGKT) is a GTP binding site.

The protein belongs to the SIMIBI class G3E GTPase family. UreG subfamily. In terms of assembly, homodimer. UreD, UreF and UreG form a complex that acts as a GTP-hydrolysis-dependent molecular chaperone, activating the urease apoprotein by helping to assemble the nickel containing metallocenter of UreC. The UreE protein probably delivers the nickel.

Its subcellular location is the cytoplasm. Facilitates the functional incorporation of the urease nickel metallocenter. This process requires GTP hydrolysis, probably effectuated by UreG. The sequence is that of Urease accessory protein UreG from Paraburkholderia xenovorans (strain LB400).